Reading from the N-terminus, the 95-residue chain is Aspartyl/glutamyl-tRNA(Asn/Gln) amidotransferase subunit C (95 aa).

Belongs to the GatC family. In terms of assembly, heterotrimer of A, B and C subunits.

The catalysed reaction is L-glutamyl-tRNA(Gln) + L-glutamine + ATP + H2O = L-glutaminyl-tRNA(Gln) + L-glutamate + ADP + phosphate + H(+). The enzyme catalyses L-aspartyl-tRNA(Asn) + L-glutamine + ATP + H2O = L-asparaginyl-tRNA(Asn) + L-glutamate + ADP + phosphate + 2 H(+). In terms of biological role, allows the formation of correctly charged Asn-tRNA(Asn) or Gln-tRNA(Gln) through the transamidation of misacylated Asp-tRNA(Asn) or Glu-tRNA(Gln) in organisms which lack either or both of asparaginyl-tRNA or glutaminyl-tRNA synthetases. The reaction takes place in the presence of glutamine and ATP through an activated phospho-Asp-tRNA(Asn) or phospho-Glu-tRNA(Gln). In Acetivibrio thermocellus (strain ATCC 27405 / DSM 1237 / JCM 9322 / NBRC 103400 / NCIMB 10682 / NRRL B-4536 / VPI 7372) (Clostridium thermocellum), this protein is Aspartyl/glutamyl-tRNA(Asn/Gln) amidotransferase subunit C.